We begin with the raw amino-acid sequence, 146 residues long: Probable trivalent organoarsenical cleaving enzyme (146 aa).

The VOC domain maps to 2–118; sequence KYVHVGVNVV…DGNEWEFFYT (117 aa). 2 residues coordinate Fe(2+): His-5 and His-62. Roxarsone (III) contacts are provided by Cys-95 and Cys-96. Glu-114 serves as a coordination point for Fe(2+).

This sequence to M.tuberculosis Rv2641. Requires Fe(2+) as cofactor.

The enzyme catalyses methylarsonous acid + AH2 + O2 = arsenite + methanol + A + H(+). It catalyses the reaction roxarsone (III) + AH2 + O2 = 4-hydroxy-3-nitrocyclohexa-2,5-dien-1-one + arsenite + A + H(+). It carries out the reaction nitarsone (III) + AH2 + O2 = 4-nitrocyclohexa-2,5-dien-1-one + arsenite + A + H(+). The catalysed reaction is 4-aminophenylarsonous acid + AH2 + O2 = 4-aminocyclohexa-2,5-dien-1-one + arsenite + A. Functionally, nonheme iron-dependent dioxygenase that can break carbon-arsenic bonds, playing a role in the detoxification of environmental organoarsenical compounds. Catalyzes the oxygen-dependent demethylation of highly toxic methylarsonous acid (MAs(III)) to arsenite, which can then be exported out of the cell. Can also cleave the C-As bond in several trivalent aromatic arsenicals, including roxarsone (III), nitarsone (III) and (4-aminophenyl)arsonous acid. Organoarsenical degradation by this enzyme is proposed to have a significant impact on the arsenic biogeocycle that maintains a balance between organic and inorganic species. The protein is Probable trivalent organoarsenical cleaving enzyme (yqcK) of Bacillus subtilis (strain 168).